The primary structure comprises 620 residues: MPLLFLERFPWPSLQTYTALSALLLAGTVLSAYSTVRDSEFSSALSEGPQNEELKLENLGNVATGVLLHLITDSLFVWVMVNTACCILMLIGKVIQCIVFGPLRVSEKQHLKDKFWNFIFYKFIFIFGVLNVQRVEEVVLWCLWFSMLIFLHLMVQLCKDRFEYLSFSPTTPMSSHVRVLALLVSVLSCCGGLAVLCALAGHIHGMHTVAFMAAECLLVTVRTGHVIIRYSIHLWDLNHEGTWENKSSYIYYTDFIMELAILSLDLMHHIHMLLFGNIWLSMASLVIFMQLRHLFHEVQRRIRRHKNYLRVIDNMESRFAVATPEELAANNDDCAICWDSMTTARKLPCGHLFHNSCLRSWLEQDTSCPTCRMSLNIHEGRREREEGQREPLEDNMAAAGAADARAHINQHNHFFHFDGSRIASWLPSFSVEVMHTTNILGIAQANNSQLNGMAHQIQEMFPQVPYHLILQDLQLTRSVEVTTDNILEGRIQVPFPTQSTDRTPIQMNAASEDGAGASSGSEVAAPEAEDFEVRGSRFSKSADERQRMLMQRKEELLLRARRRYLHKKPEDGDAYSVLGADNDDSVPSIEDEDSDSVTLRRRRLAAAAERRILRQEPSPF.

7 helical membrane-spanning segments follow: residues 75 to 95 (LFVW…GKVI), 115 to 135 (FWNF…VQRV), 138 to 158 (VVLW…VQLC), 179 to 199 (VLAL…LCAL), 201 to 221 (GHIH…LVTV), 247 to 267 (SSYI…LDLM), and 269 to 289 (HIHM…VIFM). The segment at 334 to 372 (CAICWDSMTTARKLPCGHLFHNSCLRSWLEQDTSCPTCR) adopts an RING-type; atypical zinc-finger fold. A CUE domain is found at 449-491 (QLNGMAHQIQEMFPQVPYHLILQDLQLTRSVEVTTDNILEGRI). Residues 510-526 (ASEDGAGASSGSEVAAP) are compositionally biased toward low complexity. 2 disordered regions span residues 510–544 (ASED…SADE) and 569–598 (PEDG…DSVT). A compositionally biased stretch (basic and acidic residues) spans 531 to 544 (FEVRGSRFSKSADE). Acidic residues predominate over residues 581-595 (DNDDSVPSIEDEDSD).

As to expression, widely expressed.

The protein resides in the endoplasmic reticulum membrane. It catalyses the reaction [E2 ubiquitin-conjugating enzyme]-S-ubiquitinyl-L-cysteine + [acceptor protein]-L-cysteine = [E2 ubiquitin-conjugating enzyme]-L-cysteine + [acceptor protein]-S-ubiquitinyl-L-cysteine.. It participates in protein modification; protein ubiquitination. Functionally, E3 ubiquitin-protein ligase that mediates the polyubiquitination of lysine and cysteine residues on target proteins. May participate in the final step of endoplasmic reticulum-associated degradation (ERAD). Required for proper lipid homeostasis. The protein is E3 ubiquitin-protein ligase AMFR of Danio rerio (Zebrafish).